Here is a 156-residue protein sequence, read N- to C-terminus: Arginine repressor (156 aa).

The protein belongs to the ArgR family.

It is found in the cytoplasm. It functions in the pathway amino-acid biosynthesis; L-arginine biosynthesis [regulation]. Functionally, regulates arginine biosynthesis genes. The chain is Arginine repressor from Yersinia pseudotuberculosis serotype I (strain IP32953).